We begin with the raw amino-acid sequence, 350 residues long: (S)-tetrahydroprotoberberine N-methyltransferase (350 aa).

S-adenosyl-L-methionine-binding residues include serine 91, glycine 129, asparagine 153, glutamine 157, aspartate 179, valine 180, and valine 195. Cysteine 325 is a catalytic residue.

This sequence belongs to the CFA/CMAS family. Homodimer.

The protein resides in the cytoplasm. The catalysed reaction is (S)-stylopine + S-adenosyl-L-methionine = (S)-cis-N-methylstylopine + S-adenosyl-L-homocysteine. The enzyme catalyses (S)-tetrahydropalmatine + S-adenosyl-L-methionine = (S)-cis-N-methyltetrahydropalmatine + S-adenosyl-L-homocysteine. It catalyses the reaction (S)-canadine + S-adenosyl-L-methionine = (S)-cis-N-methylcanadine + S-adenosyl-L-homocysteine. It carries out the reaction (S)-scoulerine + S-adenosyl-L-methionine = (S)-cis-N-methylscoulerine + S-adenosyl-L-homocysteine. It participates in alkaloid biosynthesis. In terms of biological role, N-methyltransferase with a broad substrate range, accepting protoberberine alkaloids (R,S)-stylopine, (R,S)-nandinine and (R,S)-tetrahydropalmatine, and to a lesser extent (R,S)-canadine, (R,S)-tetrahydrogroenlandicine (cheilanthifoline) and (S)-scoulerine. This is (S)-tetrahydroprotoberberine N-methyltransferase from Eschscholzia californica (California poppy).